We begin with the raw amino-acid sequence, 242 residues long: Small ribosomal subunit protein uS2 (242 aa).

The protein belongs to the universal ribosomal protein uS2 family.

The sequence is that of Small ribosomal subunit protein uS2 from Tolumonas auensis (strain DSM 9187 / NBRC 110442 / TA 4).